Reading from the N-terminus, the 210-residue chain is PEP-dependent dihydroxyacetone kinase, ADP-binding subunit DhaL (210 aa).

Positions 6–206 (TQIVNWLTRC…VMFMMQMLAL (201 aa)) constitute a DhaL domain. Mg(2+)-binding residues include Asp30, Asp35, and Asp37. ADP contacts are provided by residues 38-41 (HGLN), 79-80 (AS), Gly121, Met130, Arg178, and 191-193 (DPG).

As to quaternary structure, homodimer. The dihydroxyacetone kinase complex is composed of a homodimer of DhaM, a homodimer of DhaK and the subunit DhaL. DhaL also forms a complex with DhaR. Mg(2+) is required as a cofactor.

It is found in the cytoplasm. The catalysed reaction is dihydroxyacetone + phosphoenolpyruvate = dihydroxyacetone phosphate + pyruvate. Its pathway is polyol metabolism; glycerol degradation. In terms of biological role, ADP-binding subunit of the dihydroxyacetone kinase, which is responsible for the phosphoenolpyruvate (PEP)-dependent phosphorylation of dihydroxyacetone. DhaL-ADP is converted to DhaL-ATP via a phosphoryl group transfer from DhaM and transmits it to dihydroxyacetone bound to DhaK. DhaL also acts as coactivator of the transcription activator DhaR by binding to the sensor domain of DhaR. In the presence of dihydroxyacetone, DhaL-ADP displaces DhaK and stimulates DhaR activity. In the absence of dihydroxyacetone, DhaL-ADP is converted by the PTS to DhaL-ATP, which does not bind to DhaR. In Escherichia coli (strain K12), this protein is PEP-dependent dihydroxyacetone kinase, ADP-binding subunit DhaL.